A 237-amino-acid chain; its full sequence is MKPSYPQHIAVIMDGNGRWAKKQGKKRTQGHKEGAKIVRDITQWCAEKGIPYLTLYAFSTENWKRPKIEVDFLMKLLEKYLHDEKPVYMKNHIRFRVIGDISVFNTRLKNAILELEHATQNHTKLTQILALNYGSRDEIARTFIKLAHTLTPHTLASLSSQDIISMINANLDTATLPDVDMLIRTGGEKRISNFMLWQASYAELFFTPTLFPSFGKNELNAMLEEFLQRQRRFGGVE.

D14 is an active-site residue. D14 serves as a coordination point for Mg(2+). Substrate contacts are provided by residues 15 to 18, W19, R27, H31, and 59 to 61; these read GNGR and STE. N62 functions as the Proton acceptor in the catalytic mechanism. Substrate contacts are provided by residues W63, R65, R184, and 190–192; that span reads RIS. E203 contributes to the Mg(2+) binding site.

This sequence belongs to the UPP synthase family. In terms of assembly, homodimer. Mg(2+) serves as cofactor.

Catalyzes the condensation of isopentenyl diphosphate (IPP) with allylic pyrophosphates generating different type of terpenoids. In Helicobacter hepaticus (strain ATCC 51449 / 3B1), this protein is Isoprenyl transferase.